The chain runs to 647 residues: Probable cobalt/nickel-exporting P-type ATPase (647 aa).

The next 5 helical transmembrane spans lie at 33–53 (WAAA…LGAP), 55–75 (AVVW…PAWV), 94–114 (AAIG…IVIF), 260–280 (AGVV…GADL), and 291–311 (MIVA…LSAI). The 4-aspartylphosphate intermediate role is filled by Asp339. Residues Asp532 and Asp536 each contribute to the Mg(2+) site. Residues 587–607 (VIANLVMAGAAITTLVLWDLF) traverse the membrane as a helical segment.

This sequence belongs to the cation transport ATPase (P-type) (TC 3.A.3) family. Type IB subfamily.

It localises to the cell membrane. It carries out the reaction Ni(2+)(out) + ATP + H2O = Ni(2+)(in) + ADP + phosphate + H(+). The catalysed reaction is Co(2+)(out) + ATP + H2O = Co(2+)(in) + ADP + phosphate + H(+). Functionally, involved in heavy metal homeostasis. Probably exports nickel and cobalt ions out of the cell. This Mycolicibacterium smegmatis (strain ATCC 700084 / mc(2)155) (Mycobacterium smegmatis) protein is Probable cobalt/nickel-exporting P-type ATPase (ctpD).